We begin with the raw amino-acid sequence, 724 residues long: Solute carrier organic anion transporter family member 4C1 (724 aa).

The Cytoplasmic portion of the chain corresponds to 1-105 (MKSAKGIENL…QCLQRCNTPG (105 aa)). Serine 15, serine 16, serine 24, serine 26, and serine 28 each carry phosphoserine. The interval 24 to 71 (SASPSQVEVSALSSDPQRENSQPQELQKPQEPQKSPEPSLPSAPPNVS) is disordered. Residues 25–38 (ASPSQVEVSALSSD) show a composition bias toward polar residues. A compositionally biased stretch (low complexity) spans 44–60 (SQPQELQKPQEPQKSPE). Residues 106-126 (GFLLHYCLLAVTQGIVVNGLV) traverse the membrane as a helical segment. Topologically, residues 127-145 (NISISTIEKRYEMKSSLTG) are extracellular. The chain crosses the membrane as a helical span at residues 146–166 (LISSSYDISFCLLSLFVSFFG). The Cytoplasmic portion of the chain corresponds to 167-172 (ERGHKP). A helical membrane pass occupies residues 173 to 197 (RWLAFAAFMIGLGALVFSLPQFFSG). Residues 198–224 (EYKLGSLFEDTCVTTRNSTSCTSSTSS) lie on the Extracellular side of the membrane. Residues 225–254 (LSNYLYVFILGQLLLGAGGTPLYTLGTAFL) traverse the membrane as a helical segment. At 255–274 (DDSVPTHKSSLYIGTGYAMS) the chain is on the cytoplasmic side. Residues 275–295 (ILGPAIGYVLGGQLLTIYVDV) traverse the membrane as a helical segment. The Extracellular segment spans residues 296–311 (AMGESTDITEDDPRWL). The helical transmembrane segment at 312-336 (GAWWIGFLLSWIFAWSLIIPFSCFP) threads the bilayer. Residues 337–377 (KHLPGTAEIQAGKTSQAHQSNSNADAKFGKSIKDFPAALKN) are Cytoplasmic-facing. A helical membrane pass occupies residues 378–399 (LMKNAVFMCLVLSTSSEALITT). At 400-419 (GFATFLPKFIENQFGLTSSF) the chain is on the extracellular side. Residues 420-443 (AATLGGAVLIPGAALGQILGGFLV) form a helical membrane-spanning segment. Over 444–447 (SKFK) the chain is Cytoplasmic. A helical membrane pass occupies residues 448–471 (MTCKNTMKFALFTSGVALTLSFVF). The Extracellular segment spans residues 472–580 (IYAKCGNEPF…ETHCAKLPIF (109 aa)). Residues 495-549 (GNLIAPCNANCNCLRSYYYPVCGDGVQYFSPCFAGCSNSVAHRKPKVYYNCSCIE) enclose the Kazal-like domain. Cystine bridges form between cysteine 501–cysteine 530, cysteine 507–cysteine 526, and cysteine 516–cysteine 547. The chain crosses the membrane as a helical span at residues 581 to 603 (LCIFFIVIIFTFMAGTPITVSIL). Residues 604–612 (RCVNHRQRS) lie on the Cytoplasmic side of the membrane. The chain crosses the membrane as a helical span at residues 613–638 (LALGIQFMVLRLLGTIPGPIIFGFTI). The Extracellular portion of the chain corresponds to 639-672 (DSTCILWDINDCGIKGACRIYDNIKMAHMLVAIS). The chain crosses the membrane as a helical span at residues 673–690 (VTCKVITMFFNGFAIFLY). The Cytoplasmic segment spans residues 691-724 (KPPPSATDLSFHKENAVVTNVLAEQDLNKIVKEG).

It belongs to the organo anion transporter (TC 2.A.60) family.

It is found in the basolateral cell membrane. The enzyme catalyses estrone 3-sulfate(out) = estrone 3-sulfate(in). The catalysed reaction is L-thyroxine(out) = L-thyroxine(in). It catalyses the reaction 3,3',5-triiodo-L-thyronine(out) = 3,3',5-triiodo-L-thyronine(in). It carries out the reaction chenodeoxycholate(out) = chenodeoxycholate(in). The enzyme catalyses glycocholate(out) = glycocholate(in). The catalysed reaction is L-homoarginine(in) = L-homoarginine(out). It catalyses the reaction L-arginine(in) = L-arginine(out). It carries out the reaction N(omega),N(omega)-dimethyl-L-arginine(out) = N(omega),N(omega)-dimethyl-L-arginine(in). Its function is as follows. Mediates the transport of organic anions such as steroids (estrone 3-sulfate, chenodeoxycholate, glycocholate) and thyroid hormones (3,3',5-triiodo-L-thyronine (T3), L-thyroxine (T4)), in the kidney. Capable of transporting cAMP and pharmacological substances such as digoxin, ouabain and methotrexate. Transport is independent of sodium, chloride ion, and ATP. Transport activity is stimulated by an acidic extracellular environment due to increased substrate affinity to the transporter. The driving force for this transport activity is currently not known. The role of hydrogencarbonate (HCO3(-), bicarbonate) as the probable counteranion that exchanges for organic anions is still not well defined. Functions as an uptake transporter at the apical membrane, suggesting a role in renal reabsorption. Involved in the renal secretion of the uremic toxin ADMA (N(omega),N(omega)-dimethyl-L-arginine or asymmetrical dimethylarginine), which is associated to cardiovascular events and mortality, and the structurally related amino acids L-arginine and L-homoarginine (a cardioprotective biomarker). Can act bidirectionally, suggesting a dual protective role of this transport protein; exporting L-homoarginine after being synthesized in proximal tubule cells, and mediating uptake of ADMA from the blood into proximal tubule cells where it is degraded by the enzyme dimethylarginine dimethylaminohydrolase 1 (DDAH1). May be involved in sperm maturation by enabling directed movement of organic anions and compounds within or between cells. This ion-transporting process is important to maintain the strict epididymal homeostasis necessary for sperm maturation. May have a role in secretory functions since seminal vesicle epithelial cells are assumed to secrete proteins involved in decapacitation by modifying surface proteins to facilitate the acquisition of the ability to fertilize the egg. The protein is Solute carrier organic anion transporter family member 4C1 of Pongo abelii (Sumatran orangutan).